Here is a 436-residue protein sequence, read N- to C-terminus: 3-hydroxy-3-methylglutaryl-coenzyme A reductase (436 aa).

Residues glutamate 99, lysine 277, and aspartate 293 each act as charge relay system in the active site. Residue histidine 390 is the Proton donor of the active site.

It belongs to the HMG-CoA reductase family.

The enzyme catalyses (R)-mevalonate + 2 NADP(+) + CoA = (3S)-3-hydroxy-3-methylglutaryl-CoA + 2 NADPH + 2 H(+). The protein operates within metabolic intermediate biosynthesis; (R)-mevalonate biosynthesis; (R)-mevalonate from acetyl-CoA: step 3/3. Converts HMG-CoA to mevalonate. The chain is 3-hydroxy-3-methylglutaryl-coenzyme A reductase (hmgA) from Archaeoglobus fulgidus (strain ATCC 49558 / DSM 4304 / JCM 9628 / NBRC 100126 / VC-16).